An 81-amino-acid chain; its full sequence is MGKISLMLRQIVCLPIKMYQYFISPLITPCCRYYPSCSEYADSAIKHYGVIKGLLMALNRLSRCHPWSKGGYDPLFPNDKN.

The protein belongs to the UPF0161 family.

The protein resides in the cell inner membrane. Could be involved in insertion of integral membrane proteins into the membrane. The polypeptide is Putative membrane protein insertion efficiency factor (Legionella pneumophila subsp. pneumophila (strain Philadelphia 1 / ATCC 33152 / DSM 7513)).